The following is a 318-amino-acid chain: L-lactate dehydrogenase (318 aa).

Residues Val-18, Asp-39, Lys-44, Tyr-69, and 83 to 84 contribute to the NAD(+) site; that span reads GA. Substrate-binding residues include Gln-86 and Arg-92. NAD(+) is bound by residues Ser-105, 122–124, and Ser-147; that span reads VSN. 124–127 lines the substrate pocket; the sequence is NPVD. 152–155 is a binding site for substrate; the sequence is DTSR. His-179 functions as the Proton acceptor in the catalytic mechanism. Phosphotyrosine is present on Tyr-225. Thr-234 serves as a coordination point for substrate.

Belongs to the LDH/MDH superfamily. LDH family. In terms of assembly, homotetramer.

Its subcellular location is the cytoplasm. The catalysed reaction is (S)-lactate + NAD(+) = pyruvate + NADH + H(+). The protein operates within fermentation; pyruvate fermentation to lactate; (S)-lactate from pyruvate: step 1/1. Its function is as follows. Catalyzes the conversion of lactate to pyruvate. The sequence is that of L-lactate dehydrogenase from Clostridium botulinum (strain Langeland / NCTC 10281 / Type F).